We begin with the raw amino-acid sequence, 296 residues long: N-acetylmuramic acid 6-phosphate etherase (296 aa).

The SIS domain occupies 54 to 217 (VISCFQKGGR…STASMVGIGK (164 aa)). Glu-82 (proton donor) is an active-site residue. Glu-113 is an active-site residue.

It belongs to the GCKR-like family. MurNAc-6-P etherase subfamily. As to quaternary structure, homodimer.

The catalysed reaction is N-acetyl-D-muramate 6-phosphate + H2O = N-acetyl-D-glucosamine 6-phosphate + (R)-lactate. Its pathway is amino-sugar metabolism; N-acetylmuramate degradation. Its function is as follows. Specifically catalyzes the cleavage of the D-lactyl ether substituent of MurNAc 6-phosphate, producing GlcNAc 6-phosphate and D-lactate. This chain is N-acetylmuramic acid 6-phosphate etherase, found in Listeria monocytogenes serotype 4b (strain CLIP80459).